Reading from the N-terminus, the 332-residue chain is GTP 3',8-cyclase (332 aa).

Positions 9-220 constitute a Radical SAM core domain; the sequence is RFARKVDYLR…DQVRERIAER (212 aa). Arginine 18 lines the GTP pocket. Positions 25 and 29 each coordinate [4Fe-4S] cluster. S-adenosyl-L-methionine is bound at residue tyrosine 31. Residue cysteine 32 participates in [4Fe-4S] cluster binding. A GTP-binding site is contributed by arginine 67. An S-adenosyl-L-methionine-binding site is contributed by glycine 71. GTP is bound at residue threonine 98. An S-adenosyl-L-methionine-binding site is contributed by serine 122. Lysine 159 lines the GTP pocket. Methionine 193 serves as a coordination point for S-adenosyl-L-methionine. The [4Fe-4S] cluster site is built by cysteine 258 and cysteine 261. GTP is bound at residue 263–265; the sequence is RVR. Cysteine 275 is a binding site for [4Fe-4S] cluster.

This sequence belongs to the radical SAM superfamily. MoaA family. Monomer and homodimer. [4Fe-4S] cluster serves as cofactor.

The catalysed reaction is GTP + AH2 + S-adenosyl-L-methionine = (8S)-3',8-cyclo-7,8-dihydroguanosine 5'-triphosphate + 5'-deoxyadenosine + L-methionine + A + H(+). Its pathway is cofactor biosynthesis; molybdopterin biosynthesis. In terms of biological role, catalyzes the cyclization of GTP to (8S)-3',8-cyclo-7,8-dihydroguanosine 5'-triphosphate. This is GTP 3',8-cyclase from Pseudomonas syringae pv. syringae (strain B728a).